A 949-amino-acid chain; its full sequence is Nonsense-mediated mRNA decay factor SMG8 (949 aa).

3 disordered regions span residues 564–607, 624–652, and 748–768; these read SGAR…LSPT, NESQ…DTEN, and PKQQ…QQRW. Acidic residues predominate over residues 571 to 581; sequence EGDDEPEDEVV. A compositionally biased stretch (polar residues) spans 594–607; that stretch reads NTASNGCSQPLSPT. Residues 624–648 are compositionally biased toward low complexity; the sequence is NESQASSEQLSNSEQNTSSSGTSSA. Positions 749–768 are enriched in basic residues; the sequence is KQQHHTHHQQQHPGKKQQRW.

This sequence belongs to the SMG8 family.

Functionally, involved in nonsense-mediated decay (NMD) of mRNAs containing premature stop codons. Probable component of kinase complex containing nonC and recruited to stalled ribosomes. The sequence is that of Nonsense-mediated mRNA decay factor SMG8 from Drosophila erecta (Fruit fly).